A 462-amino-acid polypeptide reads, in one-letter code: C4-dicarboxylate transport transcriptional regulatory protein DctD (462 aa).

The region spanning 12–126 is the Response regulatory domain; sequence QVLLIDDDPH…ALLDSVRRAL (115 aa). At aspartate 61 the chain carries 4-aspartylphosphate. Positions 152–381 constitute a Sigma-54 factor interaction domain; that stretch reads LIGRSAGMQR…LQNAAERFAL (230 aa). ATP-binding positions include 180 to 187 and 243 to 252; these read GETGAGKE and ANGGTLFLDE.

In terms of processing, phosphorylated by DctB.

In terms of biological role, member of the two-component regulatory system DctB/DctD, which regulates C4-dicarboxylate transport via regulation of expression of the dctPQM operon and dctA. The protein is C4-dicarboxylate transport transcriptional regulatory protein DctD of Pseudomonas aeruginosa (strain ATCC 15692 / DSM 22644 / CIP 104116 / JCM 14847 / LMG 12228 / 1C / PRS 101 / PAO1).